We begin with the raw amino-acid sequence, 155 residues long: Small ribosomal subunit protein uS7 (155 aa).

It belongs to the universal ribosomal protein uS7 family. As to quaternary structure, part of the 30S ribosomal subunit. Contacts proteins S9 and S11.

In terms of biological role, one of the primary rRNA binding proteins, it binds directly to 16S rRNA where it nucleates assembly of the head domain of the 30S subunit. Is located at the subunit interface close to the decoding center, probably blocks exit of the E-site tRNA. The polypeptide is Small ribosomal subunit protein uS7 (Pseudothermotoga lettingae (strain ATCC BAA-301 / DSM 14385 / NBRC 107922 / TMO) (Thermotoga lettingae)).